A 437-amino-acid polypeptide reads, in one-letter code: Chromosomal replication initiator protein DnaA (437 aa).

Residues 1–69 (MLGDTTLKQL…AHLFELSTGI (69 aa)) are domain I, interacts with DnaA modulators. A domain II region spans residues 69 to 100 (IRPKIEIRLGSLKKDVKSSSPKAGVSKGQKST). A domain III, AAA+ region region spans residues 101–315 (ILNPSFTFDS…GIIIKLNAYA (215 aa)). ATP-binding residues include glycine 145, glycine 147, lysine 148, and threonine 149. The domain IV, binds dsDNA stretch occupies residues 316–437 (NLMNQEITLQ…ELKNKIKSRN (122 aa)).

It belongs to the DnaA family. In terms of assembly, oligomerizes as a right-handed, spiral filament on DNA at oriC.

Its subcellular location is the cytoplasm. Its function is as follows. Plays an essential role in the initiation and regulation of chromosomal replication. ATP-DnaA binds to the origin of replication (oriC) to initiate formation of the DNA replication initiation complex once per cell cycle. Binds the DnaA box (a 9 base pair repeat at the origin) and separates the double-stranded (ds)DNA. Forms a right-handed helical filament on oriC DNA; dsDNA binds to the exterior of the filament while single-stranded (ss)DNA is stabiized in the filament's interior. The ATP-DnaA-oriC complex binds and stabilizes one strand of the AT-rich DNA unwinding element (DUE), permitting loading of DNA polymerase. After initiation quickly degrades to an ADP-DnaA complex that is not apt for DNA replication. Binds acidic phospholipids. This is Chromosomal replication initiator protein DnaA from Wolinella succinogenes (strain ATCC 29543 / DSM 1740 / CCUG 13145 / JCM 31913 / LMG 7466 / NCTC 11488 / FDC 602W) (Vibrio succinogenes).